A 351-amino-acid polypeptide reads, in one-letter code: Spermidine/putrescine import ATP-binding protein PotA (351 aa).

The ABC transporter domain occupies 6 to 236 (LELRNVTKEY…PENAWVANFI (231 aa)). An ATP-binding site is contributed by 38 to 45 (GPSGCGKT).

This sequence belongs to the ABC transporter superfamily. Spermidine/putrescine importer (TC 3.A.1.11.1) family. As to quaternary structure, the complex is composed of two ATP-binding proteins (PotA), two transmembrane proteins (PotB and PotC) and a solute-binding protein (PotD).

It is found in the cell membrane. It carries out the reaction ATP + H2O + polyamine-[polyamine-binding protein]Side 1 = ADP + phosphate + polyamineSide 2 + [polyamine-binding protein]Side 1.. Functionally, part of the ABC transporter complex PotABCD involved in spermidine/putrescine import. Responsible for energy coupling to the transport system. The chain is Spermidine/putrescine import ATP-binding protein PotA from Mycoplasma capricolum subsp. capricolum (strain California kid / ATCC 27343 / NCTC 10154).